The sequence spans 673 residues: Probable lysophospholipase 4 (673 aa).

The first 19 residues, Met1–Ala19, serve as a signal peptide directing secretion. N-linked (GlcNAc...) asparagine glycosylation is found at Asn72, Asn125, Asn191, Asn194, Asn272, Asn301, Asn374, Asn404, Asn409, Asn481, Asn516, Asn545, and Asn574. Residues Thr74–Ala615 form the PLA2c domain. The tract at residues Thr631 to Ala653 is disordered.

It belongs to the lysophospholipase family.

The protein localises to the secreted. It catalyses the reaction a 1-acyl-sn-glycero-3-phosphocholine + H2O = sn-glycerol 3-phosphocholine + a fatty acid + H(+). Catalyzes the release of fatty acids from lysophospholipids. The polypeptide is Probable lysophospholipase 4 (plb4) (Schizosaccharomyces pombe (strain 972 / ATCC 24843) (Fission yeast)).